A 313-amino-acid polypeptide reads, in one-letter code: Pseudouridine-5'-phosphate glycosidase (313 aa).

The active-site Proton donor is the Glu-34. Residues Lys-95 and Val-115 each contribute to the substrate site. Asp-147 serves as a coordination point for Mn(2+). 149–151 (SAD) is a substrate binding site. The active-site Nucleophile is the Lys-168.

This sequence belongs to the pseudouridine-5'-phosphate glycosidase family. In terms of assembly, homotrimer. Mn(2+) is required as a cofactor.

The catalysed reaction is D-ribose 5-phosphate + uracil = psi-UMP + H2O. Its function is as follows. Catalyzes the reversible cleavage of pseudouridine 5'-phosphate (PsiMP) to ribose 5-phosphate and uracil. Functions biologically in the cleavage direction, as part of a pseudouridine degradation pathway. This is Pseudouridine-5'-phosphate glycosidase from Deinococcus radiodurans (strain ATCC 13939 / DSM 20539 / JCM 16871 / CCUG 27074 / LMG 4051 / NBRC 15346 / NCIMB 9279 / VKM B-1422 / R1).